We begin with the raw amino-acid sequence, 3601 residues long: Protein SPIRRIG (3601 aa).

7 disordered regions span residues 17 to 50 (AQSSDSDPFPVDLTAPPSSSSSSSSPSFTYPSSS), 398 to 426 (SSNHDSGSDDPEVFHDGENTNSTENADFS), 449 to 476 (PAEPSVGRASRSSQTKPTGHSRSRTSSV), 638 to 657 (QYSGVSSHSDRKPSSGSFRK), 1954 to 1993 (HINDADDSGSQGSLPHDQDQSTKTSISVGSFPQGQVSLGS), 2009 to 2049 (ENIL…DFQD), and 2715 to 2747 (TTHVKSETGSPRHSSSAKMDETNGREEKSEKEL). Residues 32–50 (PPSSSSSSSSPSFTYPSSS) show a composition bias toward low complexity. 2 stretches are compositionally biased toward polar residues: residues 416–426 (NTNSTENADFS) and 458–476 (SRSSQTKPTGHSRSRTSSV). A compositionally biased stretch (polar residues) spans 1974 to 1991 (STKTSISVGSFPQGQVSL). Residues 2027–2048 (EDVKKQDDHHVGPSASSERDFQ) show a composition bias toward basic and acidic residues. Residues 2715 to 2731 (TTHVKSETGSPRHSSSA) show a composition bias toward polar residues. The span at 2732 to 2747 (KMDETNGREEKSEKEL) shows a compositional bias: basic and acidic residues. In terms of domain architecture, BEACH-type PH spans 2760 to 2927 (EHLEKIRFRY…EREEVFKNLV (168 aa)). Residues 2952–3244 (GGRLFKLMAK…QLFPKAHVKR (293 aa)) form the BEACH domain. WD repeat units follow at residues 3328-3367 (HESNQIQCAGVSHDGRIVVTGAEDGLVCVWRVSKDGPRGS), 3378-3417 (AHTAKVTCLRVSQPYMMIASGSDDCTVIIWDLSSLSFVRQ), 3464-3507 (PSDS…DPVS), and 3540-3579 (FHKQPVTALHLTSDLKQLLSGDSAGQLLSWTVPDETLRAS).

In terms of assembly, interacts with DCP1. As to expression, expressed in flowers, leaves, stems, hypocotyls and roots.

It is found in the cytoplasm. The protein localises to the P-body. Its function is as follows. Involved in cell morphogenesis. May have a function in membrane fusion or membrane composition. Required for salt stress tolerance. Regulates the salt stress-dependent post-transcriptional stabilization, cytoplasmic agglomeration, and localization to P-bodies of a subset of salt stress-regulated mRNAs. The sequence is that of Protein SPIRRIG from Arabidopsis thaliana (Mouse-ear cress).